Reading from the N-terminus, the 262-residue chain is Light-harvesting complex-like protein 3 isotype 1, chloroplastic (262 aa).

The N-terminal 39 residues, 1 to 39 (MALFSPPISSSSLQNPNFIPKFSFSLLSSNRFSLLSVTR), are a transit peptide targeting the chloroplast. 2 helical membrane-spanning segments follow: residues 180–200 (AAMI…VGLV) and 202–222 (QMGN…VLFI).

In terms of assembly, interacts with GGR. Forms homodimer, and heterodimer with LIL3.2. In terms of tissue distribution, expressed in photosynthetically active tissues (at protein level).

It is found in the plastid. The protein resides in the chloroplast thylakoid membrane. Its function is as follows. Light-harvesting-like protein required for biosynthesis of phytylated chlorophylls and alpha-tocopherol in green seedlings. Functions by anchoring geranylgeranyl reductase (GGR) in the thylakoid membrane, leading to the stabilization of GGR activity. Binds chlorophyll a in the thylakoid membrane. Plays a role in the regulation of chlorophyll biosynthesis under light stress and under standard growth conditions. This is Light-harvesting complex-like protein 3 isotype 1, chloroplastic (LIL3.1) from Arabidopsis thaliana (Mouse-ear cress).